We begin with the raw amino-acid sequence, 463 residues long: Sialic acid-binding Ig-like lectin 9 (463 aa).

The N-terminal stretch at 1–17 is a signal peptide; that stretch reads MLLLLLPLLWGRERAEG. Residues 18–348 are Extracellular-facing; sequence QTSKLLTMQS…SKATSGVTQG (331 aa). Positions 20 to 140 constitute an Ig-like V-type domain; that stretch reads SKLLTMQSSV…KHHRLSVNVT (121 aa). Disulfide bonds link C36–C170, C41–C102, and C164–C213. The N-linked (GlcNAc...) asparagine glycan is linked to N101. Residue R120 coordinates N-acetylneuraminate. N-linked (GlcNAc...) asparagine glycosylation is found at N138 and N161. Residues 146–229 enclose the Ig-like C2-type 1 domain; it reads PNILIPGTLE…ASVTTNKTVH (84 aa). 4 N-linked (GlcNAc...) asparagine glycosylation sites follow: N225, N231, N238, and N256. The region spanning 236 to 336 is the Ig-like C2-type 2 domain; it reads PQNLTMTVFQ…GSQQVYLNVS (101 aa). Residues C272 and C320 are joined by a disulfide bond. N334 carries an N-linked (GlcNAc...) asparagine glycan. The helical transmembrane segment at 349-369 threads the bilayer; that stretch reads VVGGAGATALVFLSFCVIFVV. Residues 370-463 lie on the Cytoplasmic side of the membrane; the sequence is VRSCRKKSAR…TEYSEIKIHR (94 aa). The segment at 380-428 is disordered; the sequence is PAAGVGDTGIEDANAVRGSASQGPLTEPWAEDSPPDQPPPASARSSVGE. The ITIM motif motif lies at 431–436; it reads LQYASL. Residues 444-463 form a disordered region; it reads WDSRGQEATDTEYSEIKIHR. An SLAM-like motif motif is present at residues 454 to 459; that stretch reads TEYSEI.

The protein belongs to the immunoglobulin superfamily. SIGLEC (sialic acid binding Ig-like lectin) family. In terms of tissue distribution, expressed by peripheral blood leukocytes (neutrophils and monocytes but not eosinophils). Found in liver, fetal liver, bone marrow, placenta, spleen and in lower levels in skeletal muscle, fetal brain, stomach, lung, thymus, prostate, brain, mammary, adrenal gland, colon, trachea, cerebellum, testis, small intestine and spinal cordon.

Its subcellular location is the membrane. Functionally, putative adhesion molecule that mediates sialic-acid dependent binding to cells. Preferentially binds to alpha-2,3- or alpha-2,6-linked sialic acid. The sialic acid recognition site may be masked by cis interactions with sialic acids on the same cell surface. This is Sialic acid-binding Ig-like lectin 9 (SIGLEC9) from Homo sapiens (Human).